The chain runs to 371 residues: Ubiquitin receptor RAD23b (371 aa).

In terms of domain architecture, Ubiquitin-like spans 1–79 (MKLTVKTLKG…LVVMLSKSKS (79 aa)). Residues 79–117 (SGGSAGQASVQTSSVSQPVSATTSSTKPAAPSTTQSSPV) show a composition bias toward low complexity. The segment at 79–142 (SGGSAGQASV…DTYGQAASTL (64 aa)) is disordered. Positions 128–142 (PAAQTDTYGQAASTL) are enriched in polar residues. The region spanning 146–189 (SSLEQMVQQIMEMGGGSWDKETVTRALRAAYNNPERAVDYLYSG) is the UBA 1 domain. Positions 242-285 (GTLEFLRNNDQFQQLRTMVHSNPQILQPMLQELGKQNPQLLRLI) constitute an STI1 domain. Residues 325–365 (PAEQEAIQRLEAMGFDRALVIEAFLACDRNEELAANYLLEN) enclose the UBA 2 domain.

Belongs to the RAD23 family. As to quaternary structure, interacts with 'Lys-48'-linked polyubiquitin chains. Interacts with RPN10 via its ubiquitin-like domain. Interacts with UBQ1, UBQ2, UBQ5, UBQ7, UBQ10, UBQ11 and IAA16. Binds to RAD4. Widely expressed in the whole plant.

The protein localises to the nucleus. The protein resides in the cytoplasm. In terms of biological role, may be involved in nucleotide excision repair. Binds and presumably selects ubiquitin-conjugates for destruction. Prefers multiubiquitin chains rather than single ubiquitins, with a binding affinity for 'Lys-48'-linked ubiquitin chains. Acts as a ubiquitin receptor that associates with the 26S proteasomal docking subunit RPN10 for the indirect recognition of ubiquitinated substrates of ubiquitin/26S proteasome-mediated proteolysis (UPP). Involved in UV tolerance in both roots and hypocotyls, specifically in dark conditions. The polypeptide is Ubiquitin receptor RAD23b (Arabidopsis thaliana (Mouse-ear cress)).